Reading from the N-terminus, the 200-residue chain is Anthranilate synthase component 2, pyocyanine specific (200 aa).

A Glutamine amidotransferase type-1 domain is found at 2-195 (RITLLDNFDS…LLWCGALAVR (194 aa)). 56 to 58 (GPG) lines the L-glutamine pocket. Cys83 (nucleophile; for GATase activity) is an active-site residue. L-glutamine contacts are provided by residues Gln87 and 133 to 134 (SL). Residues His169 and Glu171 each act as for GATase activity in the active site.

As to quaternary structure, heterotetramer consisting of two non-identical subunits: a beta subunit (PhnB) and a large alpha subunit (PhnA).

The enzyme catalyses chorismate + L-glutamine = anthranilate + pyruvate + L-glutamate + H(+). The protein operates within secondary metabolite biosynthesis; pyocyanine biosynthesis. Part of a heterotetrameric complex that catalyzes the two-step biosynthesis of anthranilate, a precursor for Pseudomonas quinolone signal (2-heptyl-3-hydroxy-4-quinolone; PQS) production which is required to induce the genes for the biosynthesis of the virulence factor pyocyanine (PCN), a characteristic blue-green phenazine pigment produced by P.aeruginosa. In the first step, the glutamine-binding beta subunit (PhnB) of anthranilate synthase (AS) provides the glutamine amidotransferase activity which generates ammonia as a substrate that, along with chorismate, is used in the second step, catalyzed by the large alpha subunit of AS (PhnA) to produce anthranilate. The chain is Anthranilate synthase component 2, pyocyanine specific from Pseudomonas aeruginosa (strain ATCC 15692 / DSM 22644 / CIP 104116 / JCM 14847 / LMG 12228 / 1C / PRS 101 / PAO1).